Consider the following 150-residue polypeptide: Large ribosomal subunit protein bL9 (150 aa).

It belongs to the bacterial ribosomal protein bL9 family.

Functionally, binds to the 23S rRNA. The polypeptide is Large ribosomal subunit protein bL9 (Paraburkholderia xenovorans (strain LB400)).